The chain runs to 159 residues: Single-stranded DNA-binding protein 2 (159 aa).

The region spanning Met-2–Glu-104 is the SSB domain. The interval Arg-106–Phe-159 is disordered. Over residues Ser-114–Asn-127 the composition is skewed to low complexity. Residues Lys-128–Phe-143 are compositionally biased toward polar residues.

As to quaternary structure, homotetramer.

This is Single-stranded DNA-binding protein 2 (ssb2) from Listeria innocua serovar 6a (strain ATCC BAA-680 / CLIP 11262).